The primary structure comprises 529 residues: Potassium voltage-gated channel subfamily A member 6 (529 aa).

Residues 1 to 33 are disordered; the sequence is MRSEKSLTLAAPGEVRGPEGEQQDAGDFPEAGG. Topologically, residues 1 to 171 are cytoplasmic; the sequence is MRSEKSLTLA…LLFEYPESSG (171 aa). Ser-3 carries the post-translational modification Phosphoserine. Residues 172–193 traverse the membrane as a helical segment; sequence PARGIAIVSVLVILISIVIFCL. Over 194 to 262 the chain is Extracellular; sequence ETLPQFRVDG…TLGGSFFTDP (69 aa). The segment covering 210 to 220 has biased composition (low complexity); the sequence is GVSRVSPVSRG. A disordered region spans residues 210-233; that stretch reads GVSRVSPVSRGSQEEEEDEDDSYT. The chain crosses the membrane as a helical span at residues 263–284; the sequence is FFLVETLCIVWFTFELLVRFSA. A lipid anchor (S-palmitoyl cysteine) is attached at Cys-285. Topologically, residues 285–295 are cytoplasmic; the sequence is CPSKPAFFRNI. The chain crosses the membrane as a helical span at residues 296-316; it reads MNIIDLVAIFPYFITLGTELV. Over 317-337 the chain is Extracellular; the sequence is QQQEQQPASGGGGQNGQQAMS. A helical; Voltage-sensor transmembrane segment spans residues 338–358; it reads LAILRVIRLVRVFRIFKLSRH. Residues 359 to 373 lie on the Cytoplasmic side of the membrane; sequence SKGLQILGKTLQASM. Residues 360 to 373 are S4-S5 linker; sequence KGLQILGKTLQASM. The chain crosses the membrane as a helical span at residues 374–395; it reads RELGLLIFFLFIGVILFSSAVY. Over 396–409 the chain is Extracellular; it reads FAEADDDDSLFPSI. Residues 410–421 constitute an intramembrane region (helical); that stretch reads PDAFWWAVVTMT. Residues 422–427 carry the Selectivity filter motif; sequence TVGYGD. Residues 422-429 lie within the membrane without spanning it; it reads TVGYGDMY. The Extracellular portion of the chain corresponds to 430-436; that stretch reads PMTVGGK. Residues 437–465 form a helical membrane-spanning segment; the sequence is IVGSLCAIAGVLTIALPVPVIVSNFNYFY. The Cytoplasmic segment spans residues 466 to 529; it reads HRETEQEEQG…YAEKRMLTEV (64 aa). Positions 488–513 are disordered; sequence DLRATDNGLGKPDFPEANRERRPSYL. Basic and acidic residues predominate over residues 500-510; that stretch reads DFPEANRERRP. Phosphoserine; by PKA is present on Ser-511. Positions 527-529 match the PDZ-binding motif; that stretch reads TEV.

This sequence belongs to the potassium channel family. A (Shaker) (TC 1.A.1.2) subfamily. Kv1.6/KCNA6 sub-subfamily. In terms of assembly, homotetramer and heterotetramer of potassium channel proteins. Interacts with KCNAB1 and KCNAB2.

It is found in the cell membrane. It catalyses the reaction K(+)(in) = K(+)(out). Functionally, voltage-gated potassium channel that mediates transmembrane potassium transport in excitable membranes. Forms tetrameric potassium-selective channels through which potassium ions pass in accordance with their electrochemical gradient. The channel alternates between opened and closed conformations in response to the voltage difference across the membrane. Can form functional homotetrameric channels and heterotetrameric channels that contain variable proportions of KCNA1, KCNA2, KCNA4, KCNA6, and possibly other family members as well; channel properties depend on the type of alpha subunits that are part of the channel. Channel properties are modulated by cytoplasmic beta subunits that regulate the subcellular location of the alpha subunits and promote rapid inactivation. Homotetrameric channels display rapid activation and slow inactivation. This is Potassium voltage-gated channel subfamily A member 6 (KCNA6) from Homo sapiens (Human).